Here is a 275-residue protein sequence, read N- to C-terminus: Urease accessory protein UreD (275 aa).

The protein belongs to the UreD family. In terms of assembly, ureD, UreF and UreG form a complex that acts as a GTP-hydrolysis-dependent molecular chaperone, activating the urease apoprotein by helping to assemble the nickel containing metallocenter of UreC. The UreE protein probably delivers the nickel.

The protein localises to the cytoplasm. In terms of biological role, required for maturation of urease via the functional incorporation of the urease nickel metallocenter. This chain is Urease accessory protein UreD, found in Cereibacter sphaeroides (strain ATCC 17023 / DSM 158 / JCM 6121 / CCUG 31486 / LMG 2827 / NBRC 12203 / NCIMB 8253 / ATH 2.4.1.) (Rhodobacter sphaeroides).